Consider the following 130-residue polypeptide: Small ribosomal subunit protein uS9 (130 aa).

The interval 108–130 (PRMKERRKYGLKKARRAPQFSKR) is disordered. Basic residues predominate over residues 111 to 130 (KERRKYGLKKARRAPQFSKR).

The protein belongs to the universal ribosomal protein uS9 family.

This chain is Small ribosomal subunit protein uS9, found in Desulforamulus reducens (strain ATCC BAA-1160 / DSM 100696 / MI-1) (Desulfotomaculum reducens).